We begin with the raw amino-acid sequence, 221 residues long: Ras-related protein Rab-28 (221 aa).

Serine 2 bears the N-acetylserine mark. Serine 8 bears the Phosphoserine mark. The GTP site is built by glycine 21, glycine 24, lysine 25, threonine 26, serine 27, glycine 38, lysine 39, tyrosine 41, and threonine 44. Threonine 26 contacts Mg(2+). Residues 35-49 (ETFGKQYKQTIGLDF) form a switch I region. Positions 44 and 68 each coordinate Mg(2+). The switch II stretch occupies residues 68–85 (DIGGQTIGGKMLDKYIYG). Positions 71, 129, 130, 132, 160, and 161 each coordinate GTP. Cysteine methyl ester is present on cysteine 218. Cysteine 218 carries the S-farnesyl cysteine lipid modification. Residues 219–221 (AVQ) constitute a propeptide, removed in mature form.

It belongs to the small GTPase superfamily. Rab family. Interacts (prenylated form) with PDE6D; the interaction promotes RAB28 delivery to the photoreceptor outer segments. Interacts with KCNJ13; the interaction may facilitate cone outer segments phagocytosis. Interacts with RELA; the interaction contributes to RELA transport from cytoplasm to nucleus. Mg(2+) is required as a cofactor. Post-translationally, isoprenylated. As to expression, testis, brain, and to much lower levels heart, skeletal muscle and fat cells. Expressed in the retina.

It is found in the cell membrane. The protein resides in the cytoplasm. The protein localises to the cytoskeleton. It localises to the cilium basal body. Its subcellular location is the nucleus. It catalyses the reaction GTP + H2O = GDP + phosphate + H(+). Its activity is regulated as follows. Regulated by guanine nucleotide exchange factors (GEFs) which promote the exchange of bound GDP for free GTP. Regulated by GTPase activating proteins (GAPs) which increase the GTP hydrolysis activity. Inhibited by GDP dissociation inhibitors (GDIs). Its function is as follows. The small GTPases Rab are key regulators of intracellular membrane trafficking, from the formation of transport vesicles to their fusion with membranes. Rabs cycle between an inactive GDP-bound form and an active GTP-bound form that is able to recruit to membranes different sets of downstream effectors directly responsible for vesicle formation, movement, tethering and fusion. RAB28 is required for shedding and phagocytosis of cone cell outer segments (OS) discs in the retina. Also participates in nuclear factor kappa-B p65/RELA nuclear transport in endothelial cells. The protein is Ras-related protein Rab-28 of Rattus norvegicus (Rat).